Consider the following 1080-residue polypeptide: Carbamoyl phosphate synthase large chain (1080 aa).

The segment at 1–403 (MPKRTDLRTI…SLQKAVRGLE (403 aa)) is carboxyphosphate synthetic domain. ATP-binding residues include arginine 129, arginine 169, glycine 175, glycine 176, glutamate 208, valine 210, glutamate 215, glycine 241, valine 242, histidine 243, glutamine 285, and glutamate 299. The ATP-grasp 1 domain maps to 133-328 (RVAMQEIGLE…IAKIAAKLAV (196 aa)). Positions 285, 299, and 301 each coordinate Mg(2+). Positions 285, 299, and 301 each coordinate Mn(2+). An oligomerization domain region spans residues 404–554 (TGKVGLEPTG…YSTYEEECEA (151 aa)). The segment at 555-942 (APSDRRKIMI…AFARAQEAGD (388 aa)) is carbamoyl phosphate synthetic domain. An ATP-grasp 2 domain is found at 679-876 (QRLVQQLGLR…LAKIAARCMT (198 aa)). Positions 715, 754, 756, 761, 787, 788, 789, 790, 830, and 847 each coordinate ATP. Glutamine 830, glutamate 847, and asparagine 849 together coordinate Mg(2+). Mn(2+) is bound by residues glutamine 830, glutamate 847, and asparagine 849. The region spanning 943 to 1080 (IRAPQPGRAF…LQELHKELQV (138 aa)) is the MGS-like domain. The segment at 943–1080 (IRAPQPGRAF…LQELHKELQV (138 aa)) is allosteric domain.

Belongs to the CarB family. As to quaternary structure, composed of two chains; the small (or glutamine) chain promotes the hydrolysis of glutamine to ammonia, which is used by the large (or ammonia) chain to synthesize carbamoyl phosphate. Tetramer of heterodimers (alpha,beta)4. Mg(2+) serves as cofactor. Requires Mn(2+) as cofactor.

It carries out the reaction hydrogencarbonate + L-glutamine + 2 ATP + H2O = carbamoyl phosphate + L-glutamate + 2 ADP + phosphate + 2 H(+). It catalyses the reaction hydrogencarbonate + NH4(+) + 2 ATP = carbamoyl phosphate + 2 ADP + phosphate + 2 H(+). It functions in the pathway amino-acid biosynthesis; L-arginine biosynthesis; carbamoyl phosphate from bicarbonate: step 1/1. It participates in pyrimidine metabolism; UMP biosynthesis via de novo pathway; (S)-dihydroorotate from bicarbonate: step 1/3. In terms of biological role, large subunit of the glutamine-dependent carbamoyl phosphate synthetase (CPSase). CPSase catalyzes the formation of carbamoyl phosphate from the ammonia moiety of glutamine, carbonate, and phosphate donated by ATP, constituting the first step of 2 biosynthetic pathways, one leading to arginine and/or urea and the other to pyrimidine nucleotides. The large subunit (synthetase) binds the substrates ammonia (free or transferred from glutamine from the small subunit), hydrogencarbonate and ATP and carries out an ATP-coupled ligase reaction, activating hydrogencarbonate by forming carboxy phosphate which reacts with ammonia to form carbamoyl phosphate. This is Carbamoyl phosphate synthase large chain from Xylella fastidiosa (strain Temecula1 / ATCC 700964).